The chain runs to 1608 residues: DNA-directed RNA polymerase III subunit rpc2 (1608 aa).

4 residues coordinate Zn(2+): cysteine 1557, cysteine 1560, cysteine 1569, and cysteine 1572. The C4-type zinc finger occupies 1557–1572 (CKNCGFLGYEGYCQYC).

This sequence belongs to the RNA polymerase beta chain family. In terms of assembly, component of the RNA polymerase III (Pol III) complex. Post-translationally, this protein undergoes a protein self splicing that involves a post-translational excision of the intervening region (intein) followed by peptide ligation.

It is found in the nucleus. The catalysed reaction is RNA(n) + a ribonucleoside 5'-triphosphate = RNA(n+1) + diphosphate. Its function is as follows. DNA-dependent RNA polymerase catalyzes the transcription of DNA into RNA using the four ribonucleoside triphosphates as substrates. Second largest core component of RNA polymerase III which synthesizes small RNAs, such as 5S rRNA and tRNAs. Proposed to contribute to the polymerase catalytic activity and forms the polymerase active center together with the largest subunit. Pol III is composed of mobile elements and rpc2 is part of the core element with the central large cleft and probably a clamp element that moves to open and close the cleft. This Dictyostelium discoideum (Social amoeba) protein is DNA-directed RNA polymerase III subunit rpc2 (polr3b).